Consider the following 478-residue polypeptide: Alpha-1,3-mannosyl-glycoprotein 4-beta-N-acetylglucosaminyltransferase C (478 aa).

Over 1–23 the chain is Cytoplasmic; it reads MFKFHQMKHIFEILDKMRCLRKR. Residues 24–44 traverse the membrane as a helical; Signal-anchor for type II membrane protein segment; it reads STVSFLGVLVIFLLFMNLYIE. Residues 45-478 are Lumenal-facing; the sequence is DSYVLEGDKQ…IIRSISIWTS (434 aa). 2 N-linked (GlcNAc...) asparagine glycosylation sites follow: N84 and N215.

This sequence belongs to the glycosyltransferase 54 family. Requires a divalent metal cation as cofactor.

The protein resides in the golgi apparatus membrane. The enzyme catalyses N(4)-{beta-D-GlcNAc-(1-&gt;2)-alpha-D-Man-(1-&gt;3)-[beta-D-GlcNAc-(1-&gt;2)-alpha-D-Man-(1-&gt;6)]-beta-D-Man-(1-&gt;4)-beta-D-GlcNAc-(1-&gt;4)-beta-D-GlcNAc}-L-asparaginyl-[protein] + UDP-N-acetyl-alpha-D-glucosamine = N(4)-{beta-D-GlcNAc-(1-&gt;2)-[beta-D-GlcNAc-(1-&gt;4)]-alpha-D-Man-(1-&gt;3)-[beta-D-GlcNAc-(1-&gt;2)-alpha-D-Man-(1-&gt;6)]-beta-D-Man-(1-&gt;4)-beta-D-GlcNAc-(1-&gt;4)-beta-D-GlcNAc}-L-asparaginyl-[protein] + UDP + H(+). It participates in protein modification; protein glycosylation. Its function is as follows. Glycosyltransferase that participates in the transfer of N-acetylglucosamine (GlcNAc) to the core mannose residues of N-linked glycans. Catalyzes the formation of the GlcNAcbeta1-4 branch on the GlcNAcbeta1-2Manalpha1-3 arm of the core structure of N-linked glycans. Essential for the production of tri- and tetra-antennary N-linked sugar chains. Does not catalyze the transfer of GlcNAc to the Manalpha1-6 arm to form GlcNAcBeta1-4Manalpha1-6 linkage ('GnT-VI' activity). The sequence is that of Alpha-1,3-mannosyl-glycoprotein 4-beta-N-acetylglucosaminyltransferase C (MGAT4C) from Macaca fascicularis (Crab-eating macaque).